The primary structure comprises 396 residues: S-adenosylmethionine synthase (396 aa).

His-15 provides a ligand contact to ATP. Asp-17 is a Mg(2+) binding site. K(+) is bound at residue Glu-43. L-methionine is bound by residues Glu-56 and Gln-99. The flexible loop stretch occupies residues Gln-99–Arg-109. ATP is bound by residues Asp-175–Lys-177, Arg-241–Phe-242, Asp-250, Arg-256–Lys-257, Ser-273, and Lys-277. Asp-250 serves as a coordination point for L-methionine. Lys-281 is a binding site for L-methionine.

The protein belongs to the AdoMet synthase family. As to quaternary structure, homotetramer; dimer of dimers. Requires Mg(2+) as cofactor. K(+) serves as cofactor.

The protein localises to the cytoplasm. It catalyses the reaction L-methionine + ATP + H2O = S-adenosyl-L-methionine + phosphate + diphosphate. It functions in the pathway amino-acid biosynthesis; S-adenosyl-L-methionine biosynthesis; S-adenosyl-L-methionine from L-methionine: step 1/1. Functionally, catalyzes the formation of S-adenosylmethionine (AdoMet) from methionine and ATP. The overall synthetic reaction is composed of two sequential steps, AdoMet formation and the subsequent tripolyphosphate hydrolysis which occurs prior to release of AdoMet from the enzyme. The protein is S-adenosylmethionine synthase of Pelotomaculum thermopropionicum (strain DSM 13744 / JCM 10971 / SI).